We begin with the raw amino-acid sequence, 503 residues long: Carboxyl-terminal PDZ ligand of neuronal nitric oxide synthase protein (503 aa).

A PID domain is found at 26-191; sequence FQHGISFEAK…ESERNSDGSG (166 aa). A disordered region spans residues 170-212; it reads HTQQNADGQEDGESERNSDGSGDPGRQLTGAERVSTATAEETD. Residues serine 183, serine 187, serine 190, and serine 262 each carry the phosphoserine modification. Residues 266 to 285 form a disordered region; it reads LLPSSSSSKPPGLGTGTPLS. Positions 319–360 form a coiled coil; that stretch reads AAEAAARLEAQARVHQLLLQNKDMLQHISLLVKQVQELELKL. Residues serine 368, serine 371, serine 398, and serine 414 each carry the phosphoserine modification. The tract at residues 491–503 is interaction with NOS1; it reads QELGDSLDDEIAV. The PDZ-binding signature appears at 501 to 503; sequence IAV.

In terms of assembly, interacts with the PDZ domain of NOS1 or the second PDZ domain of DLG4 through its C-terminus. Interacts with RASD1 and SYN1, SYN2 and SYN3 via its PID domain. Forms a ternary complex with NOS1 and RASD1. Forms a ternary complex with NOS1 and SYN1. Mainly expressed in brain. Highly expressed in accessory olfactory bulb, caudate-putamen, cerebellum, cerebral cortex, dentate gyrus of the hippocampus, islands of Calleja, olfactory bulb and supraoptic nucleus. Expressed in kidney glomeruli podocytes (at protein level).

It localises to the cell projection. It is found in the filopodium. The protein localises to the podosome. Adapter protein involved in neuronal nitric-oxide (NO) synthesis regulation via its association with nNOS/NOS1. The complex formed with NOS1 and synapsins is necessary for specific NO and synapsin functions at a presynaptic level. Mediates an indirect interaction between NOS1 and RASD1 leading to enhance the ability of NOS1 to activate RASD1. Competes with DLG4 for interaction with NOS1, possibly affecting NOS1 activity by regulating the interaction between NOS1 and DLG4. In kidney podocytes, plays a role in podosomes and filopodia formation through CDC42 activation. This chain is Carboxyl-terminal PDZ ligand of neuronal nitric oxide synthase protein, found in Rattus norvegicus (Rat).